We begin with the raw amino-acid sequence, 478 residues long: Proline--tRNA ligase (478 aa).

Belongs to the class-II aminoacyl-tRNA synthetase family. ProS type 3 subfamily. In terms of assembly, homodimer.

Its subcellular location is the cytoplasm. It carries out the reaction tRNA(Pro) + L-proline + ATP = L-prolyl-tRNA(Pro) + AMP + diphosphate. Catalyzes the attachment of proline to tRNA(Pro) in a two-step reaction: proline is first activated by ATP to form Pro-AMP and then transferred to the acceptor end of tRNA(Pro). The chain is Proline--tRNA ligase from Ignicoccus hospitalis (strain KIN4/I / DSM 18386 / JCM 14125).